Reading from the N-terminus, the 432-residue chain is Asparagine--tRNA ligase (432 aa).

It belongs to the class-II aminoacyl-tRNA synthetase family. Homodimer.

It localises to the cytoplasm. It catalyses the reaction tRNA(Asn) + L-asparagine + ATP = L-asparaginyl-tRNA(Asn) + AMP + diphosphate + H(+). This chain is Asparagine--tRNA ligase, found in Lactobacillus helveticus (strain DPC 4571).